The following is a 131-amino-acid chain: uncharacterized protein (131 aa).

The tract at residues 60-100 (GRHTLSQVPNKGHEKASAVQLPEKQGTDQSRRGPTSAVTKA) is disordered. Over residues 91-100 (RGPTSAVTKA) the composition is skewed to polar residues.

This is an uncharacterized protein from Homo sapiens (Human).